We begin with the raw amino-acid sequence, 963 residues long: Iron-responsive element-binding protein 2 (963 aa).

Positions 512, 578, and 581 each coordinate [4Fe-4S] cluster.

Belongs to the aconitase/IPM isomerase family. In terms of assembly, interacts with RBCK1 only in iron-rich conditions. Interacts (when associated with the 4Fe-4S) with FBXL5. Interacts with CIAO1 and CIAO2A. It depends on [4Fe-4S] cluster as a cofactor. Ubiquitinated and degraded by the proteasome in presence of high level of iron and oxygen. Ubiquitinated by a SCF complex containing FBXL5. Upon iron and oxygen depletion FBXL5 is degraded, preventing ubiquitination and allowing its RNA-binding activity.

Its subcellular location is the cytoplasm. Functionally, RNA-binding protein that binds to iron-responsive elements (IRES), which are stem-loop structures found in the 5'-UTR of ferritin, and delta aminolevulinic acid synthase mRNAs, and in the 3'-UTR of transferrin receptor mRNA. Binding to the IRE element in ferritin results in the repression of its mRNA translation. Binding of the protein to the transferrin receptor mRNA inhibits the degradation of this otherwise rapidly degraded mRNA. The polypeptide is Iron-responsive element-binding protein 2 (Ireb2) (Mus musculus (Mouse)).